Reading from the N-terminus, the 120-residue chain is UPF0102 protein HSM_1206 (120 aa).

Belongs to the UPF0102 family.

This is UPF0102 protein HSM_1206 from Histophilus somni (strain 2336) (Haemophilus somnus).